We begin with the raw amino-acid sequence, 526 residues long: Ribonuclease Y (526 aa).

A helical membrane pass occupies residues 10–30 (ITFILLIVVGALGGALVGYFI). Residues 216 to 279 (TVTVVEIPNE…EVAKRALTIL (64 aa)) form the KH domain. Residues 342–435 (VLKHSIEVAF…VAAADALSAA (94 aa)) enclose the HD domain.

It belongs to the RNase Y family.

The protein resides in the cell membrane. Its function is as follows. Endoribonuclease that initiates mRNA decay. This is Ribonuclease Y from Acholeplasma laidlawii (strain PG-8A).